The chain runs to 118 residues: U-scoloptoxin(05)-Cw1a (118 aa).

The N-terminal stretch at 1-22 (MNPLNLSTFIVFTLFAASATTA) is a signal peptide.

Belongs to the scoloptoxin-05 family. Post-translationally, contains 5 disulfide bonds. As to expression, expressed by the venom gland.

Its subcellular location is the secreted. The sequence is that of U-scoloptoxin(05)-Cw1a from Cormocephalus westwoodi (Westwood's green centipede).